A 314-amino-acid polypeptide reads, in one-letter code: Melanocyte-stimulating hormone receptor (314 aa).

Over 1–35 (MSMLAPLRLVREPWNASEGNQSNATAGAGGAWCQG) the chain is Extracellular. Residues Asn-15, Asn-20, and Asn-23 are each glycosylated (N-linked (GlcNAc...) asparagine). A helical membrane pass occupies residues 36–61 (LDIPNELFLTLGLVSLVENLLVVAAI). Topologically, residues 62-70 (LKNRNLHSP) are cytoplasmic. The helical transmembrane segment at 71–91 (TYYFICCLAVSDMLVSVSNLA) threads the bilayer. At 92–116 (KTLFMLLMEHGVLVIRASIVRHMDN) the chain is on the extracellular side. A helical membrane pass occupies residues 117–138 (VIDMLICSSVVSSLSFLGVIAV). Over 139–161 (DRYITIFYALRYHSIMTLQRAVV) the chain is Cytoplasmic. Residues 162-181 (TMASVWLASTVSSTVLITYY) traverse the membrane as a helical segment. Residues 182–189 (RNNAILLC) are Extracellular-facing. A helical transmembrane segment spans residues 190-209 (LIGFFLFMLVLMLVLYIHMF). Residues 210–237 (ALACHHVRSISSQQKQPTIYRTSSLKGA) lie on the Cytoplasmic side of the membrane. A helical transmembrane segment spans residues 238–263 (VTLTILLGVFFICWGPFFFHLILIVT). The Extracellular segment spans residues 264–276 (CPTNPFCTCFFSY). A helical transmembrane segment spans residues 277-297 (FNLFLILIICNSVVDPLIYAF). Residues 298–314 (RSQELRRTLREVVLCSW) are Cytoplasmic-facing. The S-palmitoyl cysteine moiety is linked to residue Cys-312.

Belongs to the G-protein coupled receptor 1 family.

It localises to the cell membrane. In terms of biological role, receptor for MSH (alpha, beta and gamma) and ACTH. The activity of this receptor is mediated by G proteins which activate adenylate cyclase. Mediates melanogenesis via regulation of cAMP signaling in melanocytes. This Gallus gallus (Chicken) protein is Melanocyte-stimulating hormone receptor (MC1R).